The following is a 318-amino-acid chain: Anchor protein (318 aa).

The protein localises to the virion. In terms of biological role, anchors indirectly the receptor binding (RBP) protein (depolymerase) to the virion. The protein is Anchor protein of Klebsiella pneumoniae (Bacteriophage NTUH-K2044-K1-1).